Reading from the N-terminus, the 202-residue chain is Dephospho-CoA kinase (202 aa).

In terms of domain architecture, DPCK spans 3–202 (TIGITGGIGS…TKRPNPPDRL (200 aa)). 11–16 (GSGKSV) lines the ATP pocket. The tract at residues 138–161 (RAMARDGSSAETMRQRMLSQEREQ) is disordered.

The protein belongs to the CoaE family.

It is found in the cytoplasm. The enzyme catalyses 3'-dephospho-CoA + ATP = ADP + CoA + H(+). Its pathway is cofactor biosynthesis; coenzyme A biosynthesis; CoA from (R)-pantothenate: step 5/5. Catalyzes the phosphorylation of the 3'-hydroxyl group of dephosphocoenzyme A to form coenzyme A. The chain is Dephospho-CoA kinase from Porphyromonas gingivalis (strain ATCC BAA-308 / W83).